Here is a 138-residue protein sequence, read N- to C-terminus: Translation initiation factor 5A (138 aa).

A Hypusine modification is found at Lys-37.

It belongs to the eIF-5A family.

The protein localises to the cytoplasm. Functions by promoting the formation of the first peptide bond. The sequence is that of Translation initiation factor 5A (eIF5A) from Thermococcus sibiricus (strain DSM 12597 / MM 739).